The primary structure comprises 444 residues: Chromosomal replication initiator protein DnaA (444 aa).

Positions 1 to 73 (MDSSAQQLWH…AEVVQDIVGY (73 aa)) are domain I, interacts with DnaA modulators. The interval 73–104 (YPVEIQLTAQQGDLIAIFQPHTSLESELSPTN) is domain II. Residues 105-321 (QLNPKYNFSR…GALIRATTYI (217 aa)) are domain III, AAA+ region. 4 residues coordinate ATP: glycine 149, glycine 151, lysine 152, and threonine 153. The interval 322–444 (SISGLPMTVE…ERINSLSRNQ (123 aa)) is domain IV, binds dsDNA.

It belongs to the DnaA family. Oligomerizes as a right-handed, spiral filament on DNA at oriC.

The protein resides in the cytoplasm. In terms of biological role, plays an essential role in the initiation and regulation of chromosomal replication. ATP-DnaA binds to the origin of replication (oriC) to initiate formation of the DNA replication initiation complex once per cell cycle. Binds the DnaA box (a 9 base pair repeat at the origin) and separates the double-stranded (ds)DNA. Forms a right-handed helical filament on oriC DNA; dsDNA binds to the exterior of the filament while single-stranded (ss)DNA is stabiized in the filament's interior. The ATP-DnaA-oriC complex binds and stabilizes one strand of the AT-rich DNA unwinding element (DUE), permitting loading of DNA polymerase. After initiation quickly degrades to an ADP-DnaA complex that is not apt for DNA replication. Binds acidic phospholipids. This Microcystis aeruginosa (strain NIES-843 / IAM M-2473) protein is Chromosomal replication initiator protein DnaA.